Consider the following 428-residue polypeptide: Probable protein phosphatase 2C 5 (428 aa).

The PPM-type phosphatase domain occupies 25–297; that stretch reads RSEKVEKPFV…DDTTCVVVDI (273 aa). The Mn(2+) site is built by Asp73, Gly74, Asp249, and Asp288.

The protein belongs to the PP2C family. Requires Mg(2+) as cofactor. Mn(2+) is required as a cofactor.

It catalyses the reaction O-phospho-L-seryl-[protein] + H2O = L-seryl-[protein] + phosphate. It carries out the reaction O-phospho-L-threonyl-[protein] + H2O = L-threonyl-[protein] + phosphate. This chain is Probable protein phosphatase 2C 5, found in Arabidopsis thaliana (Mouse-ear cress).